We begin with the raw amino-acid sequence, 64 residues long: UPF0337 protein SAR0874 (64 aa).

Residues 1-40 are disordered; that stretch reads MADESKFEQAKGNVKETVGNVTDNKNLENEGKEDKASGKA. Over residues 25–40 the composition is skewed to basic and acidic residues; that stretch reads KNLENEGKEDKASGKA.

It belongs to the UPF0337 (CsbD) family.

The chain is UPF0337 protein SAR0874 from Staphylococcus aureus (strain MRSA252).